Consider the following 323-residue polypeptide: NADH-ubiquinone oxidoreductase chain 1 (323 aa).

8 helical membrane passes run 8–28 (LLNPLAVIIPILLAVAFLTLI), 74–94 (LLFITTPMLALTMALTLWLPL), 105–125 (LGMLFILAISSLTVYSILGSG), 150–170 (SLGLILLAMIIFAGGFTLTTF), 176–196 (TIWLLTPGWPLAAMWYISTLA), 227–247 (LFFLAEYANILLMNTLSTILF), 258–278 (ELTSINLMIKASALSMLFLWV), and 298–318 (FLPITLAMILWHTSLPIFTGS).

The protein belongs to the complex I subunit 1 family.

It is found in the mitochondrion inner membrane. The catalysed reaction is a ubiquinone + NADH + 5 H(+)(in) = a ubiquinol + NAD(+) + 4 H(+)(out). Its function is as follows. Core subunit of the mitochondrial membrane respiratory chain NADH dehydrogenase (Complex I) that is believed to belong to the minimal assembly required for catalysis. Complex I functions in the transfer of electrons from NADH to the respiratory chain. The immediate electron acceptor for the enzyme is believed to be ubiquinone. The sequence is that of NADH-ubiquinone oxidoreductase chain 1 (MT-ND1) from Latimeria chalumnae (Coelacanth).